A 173-amino-acid chain; its full sequence is Flavodoxin 2 (173 aa).

In terms of domain architecture, Flavodoxin-like spans 3 to 165; the sequence is MGLFYGSSTC…RIQTWCEQIL (163 aa).

Belongs to the flavodoxin family. It depends on FMN as a cofactor.

In terms of biological role, low-potential electron donor to a number of redox enzymes. The polypeptide is Flavodoxin 2 (fldB) (Salmonella typhi).